A 224-amino-acid chain; its full sequence is Response regulator protein GraR (224 aa).

The Response regulatory domain occupies 2–115; that stretch reads QILLVEDDNT…VLIAKLQAIY (114 aa). Position 51 is a 4-aspartylphosphate (Asp51). The ompR/PhoB-type DNA-binding region spans 126 to 224; that stretch reads KRTLTWQDAV…KVGKGYMAHE (99 aa). Thr128, Thr130, and Thr149 each carry phosphothreonine.

In terms of assembly, interacts with GraX. In terms of processing, phosphorylated by GraS. Phosphorylated by Stk1; phosphorylation increases the DNA-binding activity of GraR.

It is found in the cytoplasm. Functionally, member of the two-component regulatory system GraR/GraS involved in resistance against cationic antimicrobial peptides (CAMPs). Upon phosphorylation by GraS, functions as a transcription regulator by direct binding to promoter regions of target genes such as adhesins, exoproteins, transporters, toxins, and proteins involved in cell wall synthesis. Down-regulates the expression of many genes involved in RNA and amino acid synthesis or glycolysis. This chain is Response regulator protein GraR (graR), found in Staphylococcus aureus (strain MRSA252).